The chain runs to 333 residues: tRNA pseudouridine synthase B (333 aa).

Aspartate 46 functions as the Nucleophile in the catalytic mechanism.

The protein belongs to the pseudouridine synthase TruB family. Type 1 subfamily.

The catalysed reaction is uridine(55) in tRNA = pseudouridine(55) in tRNA. In terms of biological role, responsible for synthesis of pseudouridine from uracil-55 in the psi GC loop of transfer RNAs. This Gluconobacter oxydans (strain 621H) (Gluconobacter suboxydans) protein is tRNA pseudouridine synthase B.